The primary structure comprises 213 residues: Motile sperm domain-containing protein 1 (213 aa).

The MSP domain occupies 16–143 (PVFVFPTELI…KEHLTESLFF (128 aa)). The next 2 helical transmembrane spans lie at 159–179 (SLLT…PTLG) and 191–211 (LSVN…MAIF). The Nuclear export signal signature appears at 205–208 (LITM).

Its subcellular location is the endoplasmic reticulum membrane. It is found in the golgi apparatus membrane. Its function is as follows. Plays a role in differentiation and/or proliferation of mesenchymal stem cells. Proposed to be involved in epithelial-to-mesenchymal transition (EMT). However, another study suggests that it is not required for EMT or stem cell self-renewal and acts during later stages of differentiation. The polypeptide is Motile sperm domain-containing protein 1 (MOSPD1) (Bos taurus (Bovine)).